The chain runs to 418 residues: Deubiquitinase and deneddylase Dub1 (418 aa).

Residues 1–10 show a composition bias toward polar residues; sequence MLSPTNSISK. The tract at residues 1–23 is disordered; it reads MLSPTNSISKTVPAPPQDSSKPV. A helical membrane pass occupies residues 40 to 60; that stretch reads TALAVLLVVVTLGLILLFYSF. The segment at 75–145 is disordered; the sequence is STKEHPTISI…LPPKAPKPVK (71 aa). Residues 86–141 are compositionally biased toward pro residues; it reads EPLPSPPLAVPRPSTPPPPVISRPSTPPAPTPAISPPSTPSAPKPSTPPPLPPKAP. Active-site residues include H288, D305, and C358.

Belongs to the peptidase C48 family.

It is found in the secreted. Its subcellular location is the host cell. The protein localises to the membrane. In terms of biological role, effector proteins function to alter host cell physiology and promote bacterial survival in host tissues. This protease possesses deubiquitinating and deneddylating activities. The polypeptide is Deubiquitinase and deneddylase Dub1 (cdu1) (Chlamydia trachomatis serovar A (strain ATCC VR-571B / DSM 19440 / HAR-13)).